A 130-amino-acid polypeptide reads, in one-letter code: Methylglyoxal synthase (130 aa).

Positions 1–130 (MSKPRIALIA…DLARNMQDVC (130 aa)) constitute an MGS-like domain. Residues H11, K15, 37–40 (TGTT), and 57–58 (SG) contribute to the substrate site. Residue D63 is the Proton donor/acceptor of the active site. H90 is a binding site for substrate.

Belongs to the methylglyoxal synthase family.

The catalysed reaction is dihydroxyacetone phosphate = methylglyoxal + phosphate. Catalyzes the formation of methylglyoxal from dihydroxyacetone phosphate. The polypeptide is Methylglyoxal synthase (Burkholderia orbicola (strain AU 1054)).